The sequence spans 253 residues: Uridine phosphorylase (253 aa).

This sequence belongs to the PNP/UDP phosphorylase family. As to quaternary structure, homohexamer.

It localises to the cytoplasm. The catalysed reaction is uridine + phosphate = alpha-D-ribose 1-phosphate + uracil. Its pathway is pyrimidine metabolism; UMP biosynthesis via salvage pathway; uracil from uridine (phosphorylase route): step 1/1. Functionally, catalyzes the reversible phosphorylytic cleavage of uridine to uracil and ribose-1-phosphate. Shows weak activity towards deoxyuridine and thymidine. The produced molecules are then utilized as carbon and energy sources or in the rescue of pyrimidine bases for nucleotide synthesis. This Escherichia coli (strain K12) protein is Uridine phosphorylase.